The chain runs to 330 residues: Erlin-2-B (330 aa).

The Cytoplasmic portion of the chain corresponds to 1–2 (MS). The helical transmembrane segment at 3-23 (HAGAIAALGVALIAAALFSAI) threads the bilayer. Residues 24 to 330 (HKIEEGHVGV…NEPAAAEELK (307 aa)) lie on the Lumenal side of the membrane. An N-linked (GlcNAc...) asparagine glycan is attached at asparagine 106. The disordered stretch occupies residues 308 to 330 (SSSAGPRVQSAKRNEPAAAEELK). Over residues 319-330 (KRNEPAAAEELK) the composition is skewed to basic and acidic residues.

It belongs to the band 7/mec-2 family.

It localises to the endoplasmic reticulum membrane. Mediates the endoplasmic reticulum-associated degradation (ERAD) of inositol 1,4,5-trisphosphate receptors (IP3Rs). Promotes sterol-accelerated ERAD of HMGCR. Involved in regulation of cellular cholesterol homeostasis by regulation the SREBP signaling pathway. In Xenopus laevis (African clawed frog), this protein is Erlin-2-B (erlin2-b).